Here is a 447-residue protein sequence, read N- to C-terminus: Na(+)-translocating NADH-quinone reductase subunit A (447 aa).

The protein belongs to the NqrA family. Composed of six subunits; NqrA, NqrB, NqrC, NqrD, NqrE and NqrF.

The enzyme catalyses a ubiquinone + n Na(+)(in) + NADH + H(+) = a ubiquinol + n Na(+)(out) + NAD(+). In terms of biological role, NQR complex catalyzes the reduction of ubiquinone-1 to ubiquinol by two successive reactions, coupled with the transport of Na(+) ions from the cytoplasm to the periplasm. NqrA to NqrE are probably involved in the second step, the conversion of ubisemiquinone to ubiquinol. In Neisseria meningitidis serogroup B (strain ATCC BAA-335 / MC58), this protein is Na(+)-translocating NADH-quinone reductase subunit A.